The chain runs to 181 residues: ATP synthase subunit delta (181 aa).

This sequence belongs to the ATPase delta chain family. F-type ATPases have 2 components, F(1) - the catalytic core - and F(0) - the membrane proton channel. F(1) has five subunits: alpha(3), beta(3), gamma(1), delta(1), epsilon(1). F(0) has three main subunits: a(1), b(2) and c(10-14). The alpha and beta chains form an alternating ring which encloses part of the gamma chain. F(1) is attached to F(0) by a central stalk formed by the gamma and epsilon chains, while a peripheral stalk is formed by the delta and b chains.

The protein localises to the cell membrane. In terms of biological role, f(1)F(0) ATP synthase produces ATP from ADP in the presence of a proton or sodium gradient. F-type ATPases consist of two structural domains, F(1) containing the extramembraneous catalytic core and F(0) containing the membrane proton channel, linked together by a central stalk and a peripheral stalk. During catalysis, ATP synthesis in the catalytic domain of F(1) is coupled via a rotary mechanism of the central stalk subunits to proton translocation. Its function is as follows. This protein is part of the stalk that links CF(0) to CF(1). It either transmits conformational changes from CF(0) to CF(1) or is implicated in proton conduction. The sequence is that of ATP synthase subunit delta from Clostridioides difficile (strain 630) (Peptoclostridium difficile).